The sequence spans 302 residues: MRLGSPGLLFLLFSSLRADTQEKEVRAMVGSDVELSCACPEGSRFDLNDVYVYWQTSESKTVVTYHIPQNSSLENVDSRYRNRALMSPAGMLRGDFSLRLFNVTPQDEQKFHCLVLSQSLGFQEVLSVEVTLHVAANFSVPVVSAPHSPSQDELTFTCTSINGYPRPNVYWINKTDNSLLDQALQNDTVFLNMRGLYDVVSVLRIARTPSVNIGCCIENVLLQQNLTVGSQTGNDIGERDKITENPVSTGEKNAATWSILAVLCLLVVVAVAIGWVCRDRCLQHSYAGAWAVSPETELTGHV.

A signal peptide spans 1–18 (MRLGSPGLLFLLFSSLRA). One can recognise an Ig-like V-type domain in the interval 19–129 (DTQEKEVRAM…LGFQEVLSVE (111 aa)). The Extracellular portion of the chain corresponds to 19–256 (DTQEKEVRAM…VSTGEKNAAT (238 aa)). The cysteines at positions 37 and 113 are disulfide-linked. Asn-70, Asn-137, Asn-173, Asn-186, and Asn-225 each carry an N-linked (GlcNAc...) asparagine glycan. Positions 141 to 227 (PVVSAPHSPS…ENVLLQQNLT (87 aa)) constitute an Ig-like C2-type domain. A disulfide bridge links Cys-158 with Cys-216. The chain crosses the membrane as a helical span at residues 257 to 277 (WSILAVLCLLVVVAVAIGWVC). Residues 278–302 (RDRCLQHSYAGAWAVSPETELTGHV) lie on the Cytoplasmic side of the membrane.

This sequence belongs to the immunoglobulin superfamily. BTN/MOG family. In terms of assembly, interacts with CTLA4 (in vitro). As to expression, expressed on peripheral blood B-cells and monocytes, as well as on monocyte-derived dendritic cells (at protein level). Widely expressed (brain, heart, kidney, liver, lung, pancreas, placenta, skeletal muscle, bone marrow, colon, ovary, prostate, testis, lymph nodes, leukocytes, spleen, thymus and tonsil). In terms of tissue distribution, detected only in lymph nodes, leukocytes and spleen. Expressed on activated monocytes and dendritic cells.

Its subcellular location is the cell membrane. Ligand for the T-cell-specific cell surface receptor ICOS. Acts as a costimulatory signal for T-cell proliferation and cytokine secretion. Also induces B-cell proliferation and differentiation into plasma cells. Could play an important role in mediating local tissue responses to inflammatory conditions, as well as in modulating the secondary immune response by co-stimulating memory T-cell function. In endothelial cells, required for proper neutrophil transmigration in response to chemoattractants, such as CXCL8/IL8 or N-formyl-methionyl peptides (fMLP). The sequence is that of ICOS ligand (ICOSLG) from Homo sapiens (Human).